A 449-amino-acid polypeptide reads, in one-letter code: Interferon-related developmental regulator 1 (449 aa).

Over residues 1–10 the composition is skewed to basic residues; it reads MPKNKKRNAP. The disordered stretch occupies residues 1–41; sequence MPKNKKRNAPHRGGGGGGGSGAATSAATTGGPHRTVQPFSD. Over residues 12–21 the composition is skewed to gly residues; it reads RGGGGGGGSG. The segment covering 22–31 has biased composition (low complexity); the sequence is AATSAATTGG.

The protein belongs to the IFRD family. Interacts with PSIP1/LEDGF. In terms of tissue distribution, expressed at high levels in the embryonic brain in the period related to neuroblast proliferation and differentiation.

Its subcellular location is the cytoplasm. The protein resides in the cell membrane. It is found in the nucleus. Its function is as follows. Probably participates in neurogenesis. Could play a role in regulating gene activity in the proliferative and/or differentiative pathways induced by NGF. The polypeptide is Interferon-related developmental regulator 1 (Ifrd1) (Rattus norvegicus (Rat)).